The sequence spans 244 residues: Probable cytokinin riboside 5'-monophosphate phosphoribohydrolase LOGL2 (244 aa).

Substrate-binding positions include Glu-91, 109 to 110 (RK), and 126 to 132 (GYGTLEE).

The protein belongs to the LOG family.

It catalyses the reaction N(6)-(dimethylallyl)adenosine 5'-phosphate + H2O = N(6)-dimethylallyladenine + D-ribose 5-phosphate. It carries out the reaction 9-ribosyl-trans-zeatin 5'-phosphate + H2O = trans-zeatin + D-ribose 5-phosphate. Functionally, cytokinin-activating enzyme working in the direct activation pathway. Phosphoribohydrolase that converts inactive cytokinin nucleotides to the biologically active free-base forms. The polypeptide is Probable cytokinin riboside 5'-monophosphate phosphoribohydrolase LOGL2 (LOGL2) (Oryza sativa subsp. japonica (Rice)).